The chain runs to 33 residues: Large ribosomal subunit protein eL28 (33 aa).

The protein belongs to the eukaryotic ribosomal protein eL28 family. Component of the large ribosomal subunit.

It is found in the cytoplasm. In terms of biological role, component of the large ribosomal subunit. The ribosome is a large ribonucleoprotein complex responsible for the synthesis of proteins in the cell. The chain is Large ribosomal subunit protein eL28 (rpl28) from Xenopus laevis (African clawed frog).